We begin with the raw amino-acid sequence, 226 residues long: MGIRAIVVDTAGTTTDLNFIQDVLFPYSVKALPDFLEQNQHNVLVENCICDTKDIALEPDADLARVTEILQQWVSEDRKATPLKTLQGLIWKQGYAHGEFKGHIFPDFIEAVKRFSAQNLRIYSFSSGSVDAQKLLFSHSDGGDLTEMFNGHFDTRTGNKLDKQAYCNILNTISLSPKQVLFVSDVIEELKAAEAAGMMTCQMVRDSTQRTGEFRKISSFDELLIE.

Belongs to the HAD-like hydrolase superfamily. MasA/MtnC family. Monomer. The cofactor is Mg(2+).

The enzyme catalyses 5-methylsulfanyl-2,3-dioxopentyl phosphate + H2O = 1,2-dihydroxy-5-(methylsulfanyl)pent-1-en-3-one + phosphate. The protein operates within amino-acid biosynthesis; L-methionine biosynthesis via salvage pathway; L-methionine from S-methyl-5-thio-alpha-D-ribose 1-phosphate: step 3/6. Its pathway is amino-acid biosynthesis; L-methionine biosynthesis via salvage pathway; L-methionine from S-methyl-5-thio-alpha-D-ribose 1-phosphate: step 4/6. In terms of biological role, bifunctional enzyme that catalyzes the enolization of 2,3-diketo-5-methylthiopentyl-1-phosphate (DK-MTP-1-P) into the intermediate 2-hydroxy-3-keto-5-methylthiopentenyl-1-phosphate (HK-MTPenyl-1-P), which is then dephosphorylated to form the acireductone 1,2-dihydroxy-3-keto-5-methylthiopentene (DHK-MTPene). The chain is Enolase-phosphatase E1 from Shewanella baltica (strain OS223).